We begin with the raw amino-acid sequence, 78 residues long: uncharacterized protein (78 aa).

2 consecutive transmembrane segments (helical) span residues 20–40 (SVYF…WLVV) and 57–77 (LLMD…ILIA).

The protein localises to the cell membrane. This is an uncharacterized protein from Escherichia coli (strain K12).